The following is a 162-amino-acid chain: Caveolin-2 (162 aa).

The Cytoplasmic portion of the chain corresponds to 1-86; that stretch reads MGLETEKADV…FEISKYVIYK (86 aa). At Tyr-19 the chain carries Phosphotyrosine; by SRC. Phosphoserine is present on residues Ser-20 and Ser-23. The residue at position 27 (Tyr-27) is a Phosphotyrosine; by SRC. Ser-36 carries the phosphoserine modification. Positions 87-107 form an intramembrane region, helical; sequence FLTVFLAIPLAFTAGILFATL. The Cytoplasmic segment spans residues 108–162; the sequence is SCLHIWIIMPFVKTCLMVLPSVQTIWRSVTDVIIAPLCTSIGRICSSVSLQVSHD.

The protein belongs to the caveolin family. In terms of assembly, monomer or homodimer. Interacts with CAV1; the interaction forms a stable heterooligomeric complex that is required for targeting to lipid rafts and for caveolae formation. Tyrosine phosphorylated forms do not form heterooligomers with the Tyr-19-phosphorylated form existing as a monomer or dimer, and the Tyr-27-form as a monomer only. Interacts (tyrosine phosphorylated form) with the SH2 domain-containing proteins, RASA1, NCK1 and SRC. Interacts (tyrosine phosphorylated form) with INSR, the interaction (Tyr-27-phosphorylated form) is increased on insulin stimulation. Interacts (Tyr-19 phosphorylated form) with MAPK1 (phosphorylated form); the interaction, promoted by insulin, leads to nuclear location and MAPK1 activation. Interacts with STAT3; the interaction is increased on insulin-induced tyrosine phosphorylation leading to STAT activation. Post-translationally, phosphorylated on serine and tyrosine residues. CAV1 promotes phosphorylation on Ser-23 which then targets the complex to the plasma membrane, lipid rafts and caveolae. Phosphorylation on Ser-36 appears to modulate mitosis in endothelial cells. Phosphorylation on both Tyr-19 and Tyr-27 is required for insulin-induced 'Ser-727' phosphorylation of STAT3 and its activation. Phosphorylation on Tyr-19 is required for insulin-induced phosphorylation of MAPK1 and DNA binding of STAT3. Tyrosine phosphorylation is induced by both EGF and insulin (By. similarity).

It localises to the nucleus. The protein resides in the cytoplasm. The protein localises to the golgi apparatus membrane. It is found in the cell membrane. Its subcellular location is the membrane. It localises to the caveola. Its function is as follows. May act as a scaffolding protein within caveolar membranes. Interacts directly with G-protein alpha subunits and can functionally regulate their activity. Acts as an accessory protein in conjunction with CAV1 in targeting to lipid rafts and driving caveolae formation. The Ser-36 phosphorylated form has a role in modulating mitosis in endothelial cells. Positive regulator of cellular mitogenesis of the MAPK signaling pathway. Required for the insulin-stimulated nuclear translocation and activation of MAPK1 and STAT3, and the subsequent regulation of cell cycle progression. The chain is Caveolin-2 (CAV2) from Atelerix albiventris (Middle-African hedgehog).